The chain runs to 77 residues: Translation initiation factor IF-1, chloroplastic (77 aa).

Residues 1–71 (MKEQKLIHEG…TKGRIIYRLR (71 aa)) enclose the S1-like domain.

The protein belongs to the IF-1 family. Component of the 30S ribosomal translation pre-initiation complex which assembles on the 30S ribosome in the order IF-2 and IF-3, IF-1 and N-formylmethionyl-tRNA(fMet); mRNA recruitment can occur at any time during PIC assembly.

Its subcellular location is the plastid. The protein resides in the chloroplast. One of the essential components for the initiation of protein synthesis. Stabilizes the binding of IF-2 and IF-3 on the 30S subunit to which N-formylmethionyl-tRNA(fMet) subsequently binds. Helps modulate mRNA selection, yielding the 30S pre-initiation complex (PIC). Upon addition of the 50S ribosomal subunit IF-1, IF-2 and IF-3 are released leaving the mature 70S translation initiation complex. This is Translation initiation factor IF-1, chloroplastic from Dioscorea elephantipes (Elephant's foot yam).